The following is a 380-amino-acid chain: GDSL esterase/lipase At3g26430 (380 aa).

An N-terminal signal peptide occupies residues 1–25; that stretch reads METNLLLVKCVLLASCLIHPRACSP. The active-site Nucleophile is Ser-38. N-linked (GlcNAc...) asparagine glycosylation is found at Asn-97, Asn-115, and Asn-183. Catalysis depends on residues Asp-346 and His-349.

Belongs to the 'GDSL' lipolytic enzyme family.

It localises to the secreted. The enzyme catalyses hexadecanoate ester + H2O = an aliphatic alcohol + hexadecanoate + H(+). The catalysed reaction is a butanoate ester + H2O = an aliphatic alcohol + butanoate + H(+). Lipase activity is inhibited by phenylmethylsulfonyl fluoride (PMSF), but not neostigmine bromide (NB). Functionally, lipase that can hydrolyze p-nitrophenyl butyrate and p-nitrophenyl palmitate in vitro. Possesses low activity against p-nitrophenyl acetate. Substrate preference is p-nitrophenyl palmitate &gt; p-nitrophenyl butyrate &gt;&gt; p-nitrophenyl acetate. Lacks cholinesterase activity. This chain is GDSL esterase/lipase At3g26430, found in Arabidopsis thaliana (Mouse-ear cress).